The chain runs to 273 residues: NH(3)-dependent NAD(+) synthetase (273 aa).

47 to 54 (GISGGQDS) provides a ligand contact to ATP. Aspartate 53 serves as a coordination point for Mg(2+). Arginine 139 is a binding site for deamido-NAD(+). Threonine 159 serves as a coordination point for ATP. A Mg(2+)-binding site is contributed by glutamate 164. The deamido-NAD(+) site is built by lysine 172 and aspartate 179. ATP-binding residues include lysine 188 and threonine 210. Deamido-NAD(+) is bound at residue 259–260 (HK).

This sequence belongs to the NAD synthetase family. Homodimer.

The catalysed reaction is deamido-NAD(+) + NH4(+) + ATP = AMP + diphosphate + NAD(+) + H(+). It functions in the pathway cofactor biosynthesis; NAD(+) biosynthesis; NAD(+) from deamido-NAD(+) (ammonia route): step 1/1. Functionally, catalyzes the ATP-dependent amidation of deamido-NAD to form NAD. Uses ammonia as a nitrogen source. This is NH(3)-dependent NAD(+) synthetase from Staphylococcus aureus (strain bovine RF122 / ET3-1).